The sequence spans 713 residues: Cyclomaltodextrin glucanotransferase (713 aa).

The N-terminal stretch at 1 to 27 (MKRFMKLTAVWTLWLSLTLGLLSPVHA) is a signal peptide. Residues 28–165 (APDTSVSNKQ…NIKVIIDFAP (138 aa)) form an A1 region. Ca(2+)-binding residues include aspartate 54, asparagine 56, asparagine 59, and asparagine 60. The cysteines at positions 70 and 77 are disulfide-linked. Residues glycine 78 and aspartate 80 each coordinate Ca(2+). 127-128 (YW) provides a ligand contact to substrate. Residue asparagine 166 participates in Ca(2+) binding. Positions 166–229 (NHTSPASSDD…NLYDLADLNH (64 aa)) are b. Position 167 (histidine 167) interacts with substrate. Position 217 (isoleucine 217) interacts with Ca(2+). 220–223 (NLYD) contacts substrate. Aspartate 226 is a Ca(2+) binding site. An A2 region spans residues 230 to 433 (NNSSVDVYLK…LRKSNPAIAY (204 aa)). Residue arginine 254 coordinates substrate. Residue aspartate 256 is the Nucleophile of the active site. Residue 259 to 260 (KH) participates in substrate binding. Ca(2+) is bound at residue histidine 260. Catalysis depends on glutamate 284, which acts as the Proton donor. Residues histidine 354, aspartate 398, and arginine 402 each contribute to the substrate site. Positions 434–522 (GSTHERWINN…GTAVWQYTTD (89 aa)) are c. A d region spans residues 523 to 609 (ATTPIIGNVG…SNIYDNFEVL (87 aa)). Residues 526 to 607 (PIIGNVGPMM…AASNIYDNFE (82 aa)) enclose the IPT/TIG domain. Residues 608–713 (VLTGDQVTVR…TATVNVNWQP (106 aa)) enclose the CBM20 domain. Positions 610 to 713 (TGDQVTVRFV…TATVNVNWQP (104 aa)) are e.

Belongs to the glycosyl hydrolase 13 family. As to quaternary structure, monomer. It depends on Ca(2+) as a cofactor.

The protein resides in the secreted. The catalysed reaction is Cyclizes part of a (1-&gt;4)-alpha-D-glucan chain by formation of a (1-&gt;4)-alpha-D-glucosidic bond.. The protein is Cyclomaltodextrin glucanotransferase (cgt) of Bacillus sp. (strain 1011).